The chain runs to 369 residues: Peptide chain release factor 2 (369 aa).

Q251 bears the N5-methylglutamine mark.

The protein belongs to the prokaryotic/mitochondrial release factor family. In terms of processing, methylated by PrmC. Methylation increases the termination efficiency of RF2.

Its subcellular location is the cytoplasm. Functionally, peptide chain release factor 2 directs the termination of translation in response to the peptide chain termination codons UGA and UAA. In Chlamydia pneumoniae (Chlamydophila pneumoniae), this protein is Peptide chain release factor 2 (prfB).